Consider the following 420-residue polypeptide: Glucose-1-phosphate adenylyltransferase (420 aa).

Alpha-D-glucose 1-phosphate contacts are provided by residues Tyr-107, Gly-172, Glu-187–Lys-188, and Ser-205.

Belongs to the bacterial/plant glucose-1-phosphate adenylyltransferase family. As to quaternary structure, homotetramer.

It carries out the reaction alpha-D-glucose 1-phosphate + ATP + H(+) = ADP-alpha-D-glucose + diphosphate. Its pathway is glycan biosynthesis; glycogen biosynthesis. Involved in the biosynthesis of ADP-glucose, a building block required for the elongation reactions to produce glycogen. Catalyzes the reaction between ATP and alpha-D-glucose 1-phosphate (G1P) to produce pyrophosphate and ADP-Glc. This Rhizobium leguminosarum bv. trifolii (strain WSM2304) protein is Glucose-1-phosphate adenylyltransferase.